The sequence spans 340 residues: MISGVPDRWKVVASSLSSNLDASYPTSSSLSTEPIDTRSSSPQGSASTPVDKEKIIRGPVDYLLKCPGKDIRRKLMQAFNEWLRIPEDRLNIIAEIVGLLHTASLLIDDIQDSSKLRRGIPVAHSIFGVAQTINSANYAYFAAQEKLRELNRPKAYEIFTEELLRLHRGQGMDLYWRDSLTCPTEEEYIEMISNKTGGLFRLAIKLMQLESEVTSDFLGLVDLLGVIFQIRDDYQNLQSDLYSKNKGFCEDLTEGKFSFLIIHSINSNPGNQQLLNILRQRSEEESVKKYAVEYIRSTGSFAYCQDRLASFLHEAKMMVNVLEDNVGFSKGIYDILAFLL.

Residues 19 to 48 (NLDASYPTSSSLSTEPIDTRSSSPQGSAST) show a composition bias toward polar residues. A disordered region spans residues 19-51 (NLDASYPTSSSLSTEPIDTRSSSPQGSASTPVD). 3 residues coordinate isopentenyl diphosphate: lysine 69, arginine 72, and histidine 101. The Mg(2+) site is built by aspartate 108 and aspartate 112. Arginine 117 lines the dimethylallyl diphosphate pocket. Isopentenyl diphosphate is bound at residue arginine 118. Dimethylallyl diphosphate is bound by residues lysine 195, threonine 196, and glutamine 229. Residue aspartate 232 coordinates Mg(2+). 3 residues coordinate dimethylallyl diphosphate: asparagine 236, lysine 246, and lysine 256.

Belongs to the FPP/GGPP synthase family. It depends on Mg(2+) as a cofactor.

The catalysed reaction is isopentenyl diphosphate + dimethylallyl diphosphate = (2E)-geranyl diphosphate + diphosphate. It carries out the reaction isopentenyl diphosphate + (2E)-geranyl diphosphate = (2E,6E)-farnesyl diphosphate + diphosphate. The enzyme catalyses isopentenyl diphosphate + (2E,6E)-farnesyl diphosphate = (2E,6E,10E)-geranylgeranyl diphosphate + diphosphate. Geranylgeranyl pyrophosphate synthase; part of the ATM1 gene cluster that mediates the biosynthesis of aflatrem, a tremorgenic mycotoxin with acute neurotoxic effects. Synthesis of geranylgeranyl diphosphate (GGPP) by AtmG (a GGPP synthase) precedes condensation of GGPP with indole 3-glycerol phosphate, followed by epoxidation and cyclization by AtmM (a FAD-dependent monooxygenase) and AtmC (a prenyltransferase) to produce paspaline. AtmB is also essential for paspaline production, but its exact role has not been identified yet. AtmP, a cytochrome P450 monooxygenase, subsequently converts paspaline to 13-desoxypaxilline via PC-M6 by removal of the C-30 methyl group and oxidation at C-10. AtmQ, a cytochrome P450 monooxygenase, then catalyzes the oxidation of 13-desoxypaxilline, first at C-7 to produce paspalicine and then at C-13 to form paspalinine. Finally, AtmD prenylates paspalinine to form aflatrem. The sequence is that of Geranylgeranyl pyrophosphate synthase atmG from Aspergillus flavus.